The chain runs to 342 residues: S-adenosylmethionine:tRNA ribosyltransferase-isomerase (342 aa).

This sequence belongs to the QueA family. As to quaternary structure, monomer.

The protein resides in the cytoplasm. The enzyme catalyses 7-aminomethyl-7-carbaguanosine(34) in tRNA + S-adenosyl-L-methionine = epoxyqueuosine(34) in tRNA + adenine + L-methionine + 2 H(+). It participates in tRNA modification; tRNA-queuosine biosynthesis. Its function is as follows. Transfers and isomerizes the ribose moiety from AdoMet to the 7-aminomethyl group of 7-deazaguanine (preQ1-tRNA) to give epoxyqueuosine (oQ-tRNA). The protein is S-adenosylmethionine:tRNA ribosyltransferase-isomerase of Moorella thermoacetica (strain ATCC 39073 / JCM 9320).